Here is a 532-residue protein sequence, read N- to C-terminus: CTP synthase (532 aa).

Positions 1–267 (MTKYIFVTGG…DDIVLEHLQL (267 aa)) are amidoligase domain. Ser-13 contributes to the CTP binding site. Ser-13 is a binding site for UTP. ATP is bound at residue 14–19 (SIGKGI). Position 54 (Tyr-54) interacts with L-glutamine. Asp-71 contributes to the ATP binding site. Residues Asp-71 and Glu-141 each contribute to the Mg(2+) site. CTP is bound by residues 148–150 (DIE), 188–193 (KTKPTQ), and Lys-224. UTP-binding positions include 188–193 (KTKPTQ) and Lys-224. The Glutamine amidotransferase type-1 domain maps to 292-532 (RIGLVGKYVS…DFVGAALNNK (241 aa)). Gly-354 lines the L-glutamine pocket. Catalysis depends on Cys-381, which acts as the Nucleophile; for glutamine hydrolysis. Residues 382 to 385 (LGMQ), Glu-405, and Arg-462 contribute to the L-glutamine site. Catalysis depends on residues His-507 and Glu-509.

It belongs to the CTP synthase family. As to quaternary structure, homotetramer.

The enzyme catalyses UTP + L-glutamine + ATP + H2O = CTP + L-glutamate + ADP + phosphate + 2 H(+). The catalysed reaction is L-glutamine + H2O = L-glutamate + NH4(+). It carries out the reaction UTP + NH4(+) + ATP = CTP + ADP + phosphate + 2 H(+). The protein operates within pyrimidine metabolism; CTP biosynthesis via de novo pathway; CTP from UDP: step 2/2. With respect to regulation, allosterically activated by GTP, when glutamine is the substrate; GTP has no effect on the reaction when ammonia is the substrate. The allosteric effector GTP functions by stabilizing the protein conformation that binds the tetrahedral intermediate(s) formed during glutamine hydrolysis. Inhibited by the product CTP, via allosteric rather than competitive inhibition. Functionally, catalyzes the ATP-dependent amination of UTP to CTP with either L-glutamine or ammonia as the source of nitrogen. Regulates intracellular CTP levels through interactions with the four ribonucleotide triphosphates. This Listeria monocytogenes serotype 4b (strain F2365) protein is CTP synthase.